The following is a 76-amino-acid chain: Alpha/kappa-conotoxin-like fe14.2 (76 aa).

The signal sequence occupies residues 1–24; the sequence is MPSVRSVTCCCLLWMMLSVQLVTP. A propeptide spanning residues 25 to 39 is cleaved from the precursor; it reads GSPGTAQLSGQRTAR. Disulfide bonds link C46–C61 and C50–C63. Residue R64 is modified to Arginine amide. Positions 65-76 are excised as a propeptide; sequence GKRDVVSSSMAV.

The protein belongs to the conotoxin J superfamily. Expressed by the venom duct.

It is found in the secreted. Highly inhibits both nicotinic acetylcholine receptors (neuronal (alpha-3/beta-4) and muscular (alpha-1/beta-1/epsilon/delta) subtypes) and the voltage-gated potassium channel Kv1.6/KCNA6 subtype. The sequence is that of Alpha/kappa-conotoxin-like fe14.2 from Conus ferrugineus (Cone snail).